The sequence spans 255 residues: ParA family protein CPn_0805/CP_1066/CPj0805/CpB0834 (255 aa).

It belongs to the ParA family.

The polypeptide is ParA family protein CPn_0805/CP_1066/CPj0805/CpB0834 (Chlamydia pneumoniae (Chlamydophila pneumoniae)).